Consider the following 46-residue polypeptide: Toxin Up-1 (46 aa).

The protein localises to the secreted. It is found in the nematocyst. It localises to the target cell membrane. Its function is as follows. This toxin is a potent hemolysin devoid of enzymatic activity. Its hemolytic activity is inhibited by sphingomyelin but not by cholesterol. In erythrocyte membranes, it causes numerous cell membrane ruptures. It also exerces cytotoxicity to different cell lines. It exerces a positive inotropic effect. Also causes hemorrhage and necrosis by dilation of the blood vessels in the skin, and vascular leakage of fluids and rupture of alveolar walls of the lungs. Is a potent ichtyotoxin. May act as a pore-forming toxin. This chain is Toxin Up-1, found in Urticina piscivora (Fish-eating sea anemone).